We begin with the raw amino-acid sequence, 79 residues long: Sec-independent protein translocase protein TatA (79 aa).

A helical membrane pass occupies residues 1–21 (MGSLSIWHWIVVIAVILLLFG). Over residues 43–60 (MQDDEKTAEKPEPVKTID) the composition is skewed to basic and acidic residues. A disordered region spans residues 43 to 79 (MQDDEKTAEKPEPVKTIDHNAPAPGASRSDVGSKTTV).

Belongs to the TatA/E family. In terms of assembly, the Tat system comprises two distinct complexes: a TatABC complex, containing multiple copies of TatA, TatB and TatC subunits, and a separate TatA complex, containing only TatA subunits. Substrates initially bind to the TatABC complex, which probably triggers association of the separate TatA complex to form the active translocon.

The protein localises to the cell inner membrane. Functionally, part of the twin-arginine translocation (Tat) system that transports large folded proteins containing a characteristic twin-arginine motif in their signal peptide across membranes. TatA could form the protein-conducting channel of the Tat system. In Nitrobacter hamburgensis (strain DSM 10229 / NCIMB 13809 / X14), this protein is Sec-independent protein translocase protein TatA.